The chain runs to 608 residues: Afamin (608 aa).

Positions 1 to 21 (MRHLKLTGFIFFLLPLTESLA) are cleaved as a signal peptide. 3 consecutive Albumin domains span residues 22–210 (LPTK…APIT), 211–403 (QYLK…KFNE), and 404–599 (TTQR…KTGD). An N-linked (GlcNAc...) asparagine glycan is attached at Asn33. 11 disulfides stabilise this stretch: Cys77/Cys86, Cys99/Cys114, Cys113/Cys124, Cys148/Cys193, Cys192/Cys201, Cys224/Cys270, Cys269/Cys277, Cys289/Cys303, Cys302/Cys313, Cys340/Cys385, and Cys384/Cys393. N-linked (GlcNAc...) asparagine glycosylation is present at Asn109. Asn153 carries N-linked (GlcNAc...) asparagine glycosylation. Residues 215-319 (ASSSYQRNVC…REACIINANK (105 aa)) are binding pocket for hydrophobic ligands. Residue Asn402 is glycosylated (N-linked (GlcNAc...) asparagine). 5 disulfide bridges follow: Cys416–Cys462, Cys461–Cys470, Cys483–Cys499, Cys498–Cys509, and Cys580–Cys589. Asn488 carries N-linked (GlcNAc...) asparagine glycosylation. The tract at residues 583-608 (VQEPESCFSPESSKTGDESQATEKQR) is disordered. The segment covering 596 to 608 (KTGDESQATEKQR) has biased composition (basic and acidic residues).

This sequence belongs to the ALB/AFP/VDB family. In terms of assembly, forms a 1:1 complex with Wnt family members; interacts with WNT1, WNT2B, WNT3, WNT5A, WNT7A, WNT7B, WNT8, WNT9A, WNT9B, WNT10A and WNT10B. Interacts with WNT3A. N-glycosylated; more than 90% of the glycans are sialylated. As to expression, detected in brain, especially on brain capillaries (at protein level). Expressed in isolated brain capillaries.

The protein resides in the secreted. Functionally, functions as a carrier for hydrophobic molecules in body fluids. Essential for the solubility and activity of lipidated Wnt family members, including WNT1, WNT2B, WNT3, WNT3A, WNT5A, WNT7A, WNT7B, WNT8, WNT9A, WNT9B, WNT10A and WNT10B. Binds vitamin E. May transport vitamin E in body fluids under conditions where the lipoprotein system is not sufficient. May be involved in the transport of vitamin E across the blood-brain barrier. This chain is Afamin (Afm), found in Mus musculus (Mouse).